Here is a 179-residue protein sequence, read N- to C-terminus: Large ribosomal subunit protein uL5 (179 aa).

It belongs to the universal ribosomal protein uL5 family. As to quaternary structure, part of the 50S ribosomal subunit; part of the 5S rRNA/L5/L18/L25 subcomplex. Contacts the 5S rRNA and the P site tRNA. Forms a bridge to the 30S subunit in the 70S ribosome.

Functionally, this is one of the proteins that bind and probably mediate the attachment of the 5S RNA into the large ribosomal subunit, where it forms part of the central protuberance. In the 70S ribosome it contacts protein S13 of the 30S subunit (bridge B1b), connecting the 2 subunits; this bridge is implicated in subunit movement. Contacts the P site tRNA; the 5S rRNA and some of its associated proteins might help stabilize positioning of ribosome-bound tRNAs. The polypeptide is Large ribosomal subunit protein uL5 (Variovorax paradoxus (strain S110)).